The chain runs to 288 residues: Disulfide-bond oxidoreductase YghU (288 aa).

Glutathione contacts are provided by residues asparagine 26, 52 to 54, glutamine 87, isoleucine 101, 117 to 118, glutamine 151, and arginine 178; these read TPN and ES. The GST N-terminal domain maps to 46 to 133; it reads QLYSLGTPNG…YLAEKFGYFL (88 aa). Residues 139 to 265 form the GST C-terminal domain; that stretch reads KRTETMNWLF…RIVNRTNGPL (127 aa). A disordered region spans residues 260–288; sequence RTNGPLNEQLHERHDASDFETNTEDKRQG. The span at 268 to 288 shows a compositional bias: basic and acidic residues; it reads QLHERHDASDFETNTEDKRQG.

It belongs to the GST superfamily. Nu-class GSH transferase family. In terms of assembly, homodimer.

Its function is as follows. Exhibits a robust glutathione (GSH)-dependent disulfide-bond reductase activity toward the model substrate, 2-hydroxyethyl disulfide; the actual physiological substrates are not known. Also displays a modest GSH-dependent peroxidase activity toward several organic hydroperoxides, such as cumene hydroperoxide and linoleic acid 13(S)-hydroperoxide, but does not reduce H(2)O(2) or tert-butyl hydroperoxide at appreciable rates. Exhibits little or no GSH transferase activity with most typical electrophilic substrates, and has no detectable transferase activity toward 1-chloro-2,4-dinitrobenzene (CDNB) with glutathionylspermidine (GspSH) as the nucleophilic substrate. This is Disulfide-bond oxidoreductase YghU (yghU) from Escherichia coli (strain K12).